A 204-amino-acid polypeptide reads, in one-letter code: Dephospho-CoA kinase (204 aa).

Residues 12-204 (RIGVTGGIAS…AWRDQISSIC (193 aa)) enclose the DPCK domain. 20 to 25 (ASGKSS) is an ATP binding site.

It belongs to the CoaE family.

Its subcellular location is the cytoplasm. It catalyses the reaction 3'-dephospho-CoA + ATP = ADP + CoA + H(+). It participates in cofactor biosynthesis; coenzyme A biosynthesis; CoA from (R)-pantothenate: step 5/5. In terms of biological role, catalyzes the phosphorylation of the 3'-hydroxyl group of dephosphocoenzyme A to form coenzyme A. The protein is Dephospho-CoA kinase of Prochlorococcus marinus (strain MIT 9313).